The sequence spans 386 residues: Ovalbumin (386 aa).

N-acetylglycine is present on glycine 2. The not cleaved signal peptide spans 22–48; that stretch reads HHANENIFYSPFTIISALAMVYLGAKD. Serine 69 carries the phosphoserine modification. A disulfide bond links cysteine 74 and cysteine 121. Asparagine 293 and asparagine 312 each carry an N-linked (GlcNAc...) asparagine glycan. Serine 345 bears the Phosphoserine mark. Asparagine 372 carries N-linked (GlcNAc...) asparagine glycosylation.

Belongs to the serpin family. Ov-serpin subfamily. In terms of processing, the signal sequence is not cleaved. The functional signal for membrane translocation of ovalbumin becomes accessible when the nascent chain is 50 to 60 residues long. The hydrophobic sequence which lies between residues 27 and 43 folds back on the preceding residues to form an amphipathic hairpin structure which is the signal element recognized by the membrane. As to expression, major protein of egg white.

It localises to the secreted. In terms of biological role, storage protein of egg white. Lack protease inhibitory activity. This chain is Ovalbumin (SERPINB14), found in Meleagris gallopavo (Wild turkey).